Reading from the N-terminus, the 640-residue chain is 5-aminolevulinate synthase, non-specific, mitochondrial (640 aa).

The N-terminal 56 residues, 1 to 56, are a transit peptide targeting the mitochondrion; sequence METVVRSCPFLSRVPQAFLQKAGKSLLFYAQNCPKMMEVGAKPAPRALSTAAVHYQ. 2 disordered regions span residues 60-103 and 143-163; these read ETPP…TSQG and EVAETSGGPSVVSVKTDGGDP. The span at 75–92 shows a compositional bias: polar residues; the sequence is VQQTPDGSQQSPDGTQLP. 3 residues coordinate substrate: Arg217, Ser334, and Lys353. Ser386, His414, and Thr442 together coordinate pyridoxal 5'-phosphate. Lys445 is a catalytic residue. N6-(pyridoxal phosphate)lysine is present on Lys445. The pyridoxal 5'-phosphate site is built by Thr474 and Thr475. Position 562 (Thr562) interacts with substrate. Pro576 carries the post-translational modification Hydroxyproline.

Belongs to the class-II pyridoxal-phosphate-dependent aminotransferase family. In terms of assembly, homodimer. Interacts (hydroxylated form) with VHL. Pyridoxal 5'-phosphate serves as cofactor. In terms of processing, in normoxia, is hydroxylated at Pro-576, promoting interaction with VHL, initiating ubiquitination and subsequent degradation via the proteasome. Ubiquitinated; in normoxia following hydroxylation and interaction with VHL, leading to its subsequent degradation via the proteasome.

It localises to the mitochondrion inner membrane. It catalyses the reaction succinyl-CoA + glycine + H(+) = 5-aminolevulinate + CO2 + CoA. The protein operates within porphyrin-containing compound metabolism; protoporphyrin-IX biosynthesis; 5-aminolevulinate from glycine: step 1/1. Functionally, catalyzes the pyridoxal 5'-phosphate (PLP)-dependent condensation of succinyl-CoA and glycine to form aminolevulinic acid (ALA), with CoA and CO2 as by-products. In Pongo abelii (Sumatran orangutan), this protein is 5-aminolevulinate synthase, non-specific, mitochondrial (ALAS1).